The chain runs to 382 residues: Ribosomal RNA large subunit methyltransferase G (382 aa).

It belongs to the methyltransferase superfamily. RlmG family.

It is found in the cytoplasm. It catalyses the reaction guanosine(1835) in 23S rRNA + S-adenosyl-L-methionine = N(2)-methylguanosine(1835) in 23S rRNA + S-adenosyl-L-homocysteine + H(+). In terms of biological role, specifically methylates the guanine in position 1835 (m2G1835) of 23S rRNA. The chain is Ribosomal RNA large subunit methyltransferase G from Pseudoalteromonas translucida (strain TAC 125).